Consider the following 569-residue polypeptide: TBCC domain-containing protein 1 (569 aa).

The region spanning 304-435 (PRSHRIVVMS…LEDHMARTGL (132 aa)) is the C-CAP/cofactor C-like domain.

The protein belongs to the TBCC family.

It is found in the cytoplasm. The protein localises to the cytoskeleton. The protein resides in the microtubule organizing center. Its subcellular location is the centrosome. It localises to the spindle pole. Functionally, plays a role in the regulation of centrosome and Golgi apparatus positioning, with consequences on cell shape and cell migration. The chain is TBCC domain-containing protein 1 (Tbccd1) from Rattus norvegicus (Rat).